The chain runs to 110 residues: Insulin (110 aa).

Positions 1-24 (MALWMHLLTVLALLALWGPNTGQA) are cleaved as a signal peptide. 3 disulfides stabilise this stretch: C31–C96, C43–C109, and C95–C100. The propeptide at 57–87 (ELEDPQVEQTELGMGLGAGGLQPLALEMALQ) is c peptide.

It belongs to the insulin family. As to quaternary structure, heterodimer of a B chain and an A chain linked by two disulfide bonds.

Its subcellular location is the secreted. Functionally, insulin decreases blood glucose concentration. It increases cell permeability to monosaccharides, amino acids and fatty acids. It accelerates glycolysis, the pentose phosphate cycle, and glycogen synthesis in liver. The polypeptide is Insulin (INS) (Cavia porcellus (Guinea pig)).